The following is a 521-amino-acid chain: MLPSAMYPELLADLVTDLPHAVRLQRLVSMLRTHFRCGAVALLRLEEDHLRPVAVDGLVRDALGRRFAVGLHPRLAAILARRGVTCFHHDSMLPDPYDGLIDEHVGEPLPVHDCMGTSLAVDGQPWGALTLDALAIGTFDAAAQAELQRLTVIVEAAIRTTRLEGEIRALQLARGTPEADEGTAQHGDIGGEIIGQSEAIANLLHELEVVADTDLPVLLLGETGVGKELFAHRLHRQSRRRAQPLVHVNCAALPESLAESELFGHARGAFSGATGERPGRFEAADGGTLFLDEVGELPLAIQAKLLRTLQNGEIQRLGSDRPRRVNVRVIAATNRNLREHVRDGSFRADLYHRLSVYPIPIPPLRERGNDVLLLAGRFLELNRARLGLRSLRLSGGAQDALRSYRWPGNVRELEHVISRAALRAVSRGAGRNDIVTLEPELLDLDGLEVPAAHHAGAGMASAFAAPALAAGITLRDAVEQTQRACIEQALKDQGGNWAQAARQLGIDASNLHKLARRLGCK.

Aspartate 56 is subject to 4-aspartylphosphate. One can recognise a Sigma-54 factor interaction domain in the interval 193-422 (IIGQSEAIAN…LEHVISRAAL (230 aa)). Residues 221-228 (GETGVGKE) and 293-302 (EVGELPLAIQ) contribute to the ATP site. Positions 497 to 516 (WAQAARQLGIDASNLHKLAR) form a DNA-binding region, H-T-H motif.

It functions in the pathway nitrogen metabolism; nitrate reduction (denitrification) [regulation]. Required for the nitric oxide (NO) induced expression of NO reductase. Not required for expression of 2 other pathway members, nitrate reductase (nirS) and nitrous oxide reductase (nosZ). The chain is Nitric oxide reductase transcription regulator NorR2 (norR2) from Cupriavidus necator (strain ATCC 17699 / DSM 428 / KCTC 22496 / NCIMB 10442 / H16 / Stanier 337) (Ralstonia eutropha).